The primary structure comprises 620 residues: E3 ubiquitin-protein ligase AMFR (620 aa).

7 helical membrane-spanning segments follow: residues 75-95 (LFVW…GKVI), 115-135 (FWNF…VQRV), 138-158 (VVLW…VQLC), 179-199 (VLAL…LCAL), 201-221 (GHIH…LVTV), 247-267 (SSYI…LDLM), and 269-289 (HIHM…VIFM). An RING-type; atypical zinc finger spans residues 334-372 (CAICWDSMTTARKLPCGHLFHNSCLRSWLEQDTSCPTCR). The region spanning 449–491 (QLNGMAHQIQEMFPQVPYHLILQDLQLTRSVEVTTDNILEGRI) is the CUE domain. Residues 510–526 (ASEDGAGASSGSEVAAP) are compositionally biased toward low complexity. 2 disordered regions span residues 510 to 544 (ASED…SADE) and 569 to 598 (PEDG…DSVT). The span at 531 to 544 (FEVRGSRFSKSADE) shows a compositional bias: basic and acidic residues. Acidic residues predominate over residues 581 to 595 (DNDDSVPSIEDEDSD).

As to expression, widely expressed.

The protein localises to the endoplasmic reticulum membrane. It catalyses the reaction [E2 ubiquitin-conjugating enzyme]-S-ubiquitinyl-L-cysteine + [acceptor protein]-L-cysteine = [E2 ubiquitin-conjugating enzyme]-L-cysteine + [acceptor protein]-S-ubiquitinyl-L-cysteine.. Its pathway is protein modification; protein ubiquitination. E3 ubiquitin-protein ligase that mediates the polyubiquitination of lysine and cysteine residues on target proteins. May participate in the final step of endoplasmic reticulum-associated degradation (ERAD). Required for proper lipid homeostasis. This is E3 ubiquitin-protein ligase AMFR from Danio rerio (Zebrafish).